A 244-amino-acid chain; its full sequence is UPF0280 protein Msp_1322 (244 aa).

The protein belongs to the UPF0280 family.

This Methanosphaera stadtmanae (strain ATCC 43021 / DSM 3091 / JCM 11832 / MCB-3) protein is UPF0280 protein Msp_1322.